Reading from the N-terminus, the 885-residue chain is Alanine--tRNA ligase (885 aa).

His-569, His-573, Cys-672, and His-676 together coordinate Zn(2+).

It belongs to the class-II aminoacyl-tRNA synthetase family. Zn(2+) serves as cofactor.

Its subcellular location is the cytoplasm. It catalyses the reaction tRNA(Ala) + L-alanine + ATP = L-alanyl-tRNA(Ala) + AMP + diphosphate. Its function is as follows. Catalyzes the attachment of alanine to tRNA(Ala) in a two-step reaction: alanine is first activated by ATP to form Ala-AMP and then transferred to the acceptor end of tRNA(Ala). Also edits incorrectly charged Ser-tRNA(Ala) and Gly-tRNA(Ala) via its editing domain. The protein is Alanine--tRNA ligase of Chlorobaculum tepidum (strain ATCC 49652 / DSM 12025 / NBRC 103806 / TLS) (Chlorobium tepidum).